Consider the following 177-residue polypeptide: Large ribosomal subunit protein uL6 (177 aa).

This sequence belongs to the universal ribosomal protein uL6 family. As to quaternary structure, part of the 50S ribosomal subunit.

Functionally, this protein binds to the 23S rRNA, and is important in its secondary structure. It is located near the subunit interface in the base of the L7/L12 stalk, and near the tRNA binding site of the peptidyltransferase center. This chain is Large ribosomal subunit protein uL6, found in Pseudomonas fluorescens (strain SBW25).